The primary structure comprises 204 residues: Probable carboxysome shell protein CsoS1E (204 aa).

Composition is skewed to low complexity over residues 1 to 14 (MPKP…DSPS), 41 to 84 (SAST…AAGS), and 92 to 102 (GGAIKPPASSS). The segment at 1-102 (MPKPSSSSSS…GAIKPPASSS (102 aa)) is disordered. The BMC domain occupies 111–196 (ALGMIETRGM…PHQEVEPALR (86 aa)).

This sequence belongs to the bacterial microcompartments protein family. In terms of assembly, homohexamer.

It is found in the carboxysome. In terms of biological role, a probable carboxysomal shell protein found only in Prochlorococcus and Synechococcus strains that grow in low light. This chain is Probable carboxysome shell protein CsoS1E, found in Prochlorococcus marinus (strain MIT 9313).